We begin with the raw amino-acid sequence, 142 residues long: Transcriptional regulator MraZ (142 aa).

SpoVT-AbrB domains are found at residues 5–47 and 76–119; these read THSP…SERE and ASDE…DAQA.

Belongs to the MraZ family. As to quaternary structure, forms oligomers.

The protein localises to the cytoplasm. It is found in the nucleoid. The sequence is that of Transcriptional regulator MraZ from Arthrobacter sp. (strain FB24).